Consider the following 957-residue polypeptide: Glycine dehydrogenase (decarboxylating) (957 aa).

Position 708 is an N6-(pyridoxal phosphate)lysine (lysine 708).

Belongs to the GcvP family. As to quaternary structure, the glycine cleavage system is composed of four proteins: P, T, L and H. It depends on pyridoxal 5'-phosphate as a cofactor.

It catalyses the reaction N(6)-[(R)-lipoyl]-L-lysyl-[glycine-cleavage complex H protein] + glycine + H(+) = N(6)-[(R)-S(8)-aminomethyldihydrolipoyl]-L-lysyl-[glycine-cleavage complex H protein] + CO2. Functionally, the glycine cleavage system catalyzes the degradation of glycine. The P protein binds the alpha-amino group of glycine through its pyridoxal phosphate cofactor; CO(2) is released and the remaining methylamine moiety is then transferred to the lipoamide cofactor of the H protein. This is Glycine dehydrogenase (decarboxylating) from Cronobacter sakazakii (strain ATCC BAA-894) (Enterobacter sakazakii).